Reading from the N-terminus, the 147-residue chain is uncharacterized protein (147 aa).

Positions 44-147 (LVGYIDKEIH…LKSIKERLSI (104 aa)) constitute an HTH LytTR-type domain.

Its subcellular location is the cytoplasm. This is an uncharacterized protein from Staphylococcus aureus (strain Mu50 / ATCC 700699).